The chain runs to 137 residues: Small ribosomal subunit protein uS11 (137 aa).

The tract at residues 1–25 is disordered; that stretch reads MADRRRGAARGGAARPRRRERKNIP. A compositionally biased stretch (basic residues) spans 15-25; that stretch reads RPRRRERKNIP.

The protein belongs to the universal ribosomal protein uS11 family. As to quaternary structure, part of the 30S ribosomal subunit. Interacts with proteins S7 and S18. Binds to IF-3.

Its function is as follows. Located on the platform of the 30S subunit, it bridges several disparate RNA helices of the 16S rRNA. Forms part of the Shine-Dalgarno cleft in the 70S ribosome. The chain is Small ribosomal subunit protein uS11 from Thermomicrobium roseum (strain ATCC 27502 / DSM 5159 / P-2).